The chain runs to 217 residues: tRNA (guanine-N(7)-)-methyltransferase (217 aa).

Residues E44, E69, D96, and D118 each coordinate S-adenosyl-L-methionine. D118 is a catalytic residue. Substrate is bound by residues K122, D154, and 191 to 194 (TEYE).

This sequence belongs to the class I-like SAM-binding methyltransferase superfamily. TrmB family.

It carries out the reaction guanosine(46) in tRNA + S-adenosyl-L-methionine = N(7)-methylguanosine(46) in tRNA + S-adenosyl-L-homocysteine. The protein operates within tRNA modification; N(7)-methylguanine-tRNA biosynthesis. Its function is as follows. Catalyzes the formation of N(7)-methylguanine at position 46 (m7G46) in tRNA. The protein is tRNA (guanine-N(7)-)-methyltransferase of Bacillus cereus (strain G9842).